A 506-amino-acid polypeptide reads, in one-letter code: Glutamate--tRNA ligase (506 aa).

Residues P9–G19 carry the 'HIGH' region motif. The short motif at K251–R255 is the 'KMSKS' region element. Residue K254 participates in ATP binding.

This sequence belongs to the class-I aminoacyl-tRNA synthetase family. Glutamate--tRNA ligase type 1 subfamily. As to quaternary structure, monomer.

The protein localises to the cytoplasm. The catalysed reaction is tRNA(Glu) + L-glutamate + ATP = L-glutamyl-tRNA(Glu) + AMP + diphosphate. Its function is as follows. Catalyzes the attachment of glutamate to tRNA(Glu) in a two-step reaction: glutamate is first activated by ATP to form Glu-AMP and then transferred to the acceptor end of tRNA(Glu). The chain is Glutamate--tRNA ligase from Treponema denticola (strain ATCC 35405 / DSM 14222 / CIP 103919 / JCM 8153 / KCTC 15104).